The sequence spans 497 residues: mRNA cleavage and polyadenylation factor CLP1 (497 aa).

ATP contacts are provided by residues E34, K73, and 157–162 (HSGKTS).

It belongs to the Clp1 family. Clp1 subfamily. In terms of assembly, component of a pre-mRNA cleavage factor complex. Interacts directly with PCF11.

The protein resides in the nucleus. In terms of biological role, required for endonucleolytic cleavage during polyadenylation-dependent pre-mRNA 3'-end formation. This Debaryomyces hansenii (strain ATCC 36239 / CBS 767 / BCRC 21394 / JCM 1990 / NBRC 0083 / IGC 2968) (Yeast) protein is mRNA cleavage and polyadenylation factor CLP1.